The chain runs to 414 residues: Arrestin domain-containing protein 3 (414 aa).

2 short sequence motifs (PPxY motif) span residues 346–349 (PPSY) and 391–394 (PPLY). The disordered stretch occupies residues 393–414 (LYSEIDPNPDQSADDRPSCPSR). Positions 405–414 (ADDRPSCPSR) are enriched in basic and acidic residues.

This sequence belongs to the arrestin family. In terms of assembly, interacts (via PPxY motifs) with NEDD4 (via WW domains). Interacts with ADRB2. Interacts with ADRB3. Interacts with HGS (via PPxY motifs). Does not bind TXN (thioredoxin). Interacts with ITCH.

It localises to the cytoplasm. The protein localises to the cell membrane. It is found in the lysosome. Its subcellular location is the endosome. The protein resides in the early endosome. Adapter protein that plays a role in regulating cell-surface expression of adrenergic receptors and probably also other G protein-coupled receptors. Plays a role in NEDD4-mediated ubiquitination and endocytosis af activated ADRB2 and subsequent ADRB2 degradation. May recruit NEDD4 to ADRB2. Alternatively, may function as adapter protein that does not play a major role in recruiting NEDD4 to ADRB2, but rather plays a role in a targeting ADRB2 to endosomes. The chain is Arrestin domain-containing protein 3 (ARRDC3) from Pongo abelii (Sumatran orangutan).